The chain runs to 426 residues: Histidine--tRNA ligase (426 aa).

Belongs to the class-II aminoacyl-tRNA synthetase family.

It localises to the cytoplasm. The catalysed reaction is tRNA(His) + L-histidine + ATP = L-histidyl-tRNA(His) + AMP + diphosphate + H(+). The polypeptide is Histidine--tRNA ligase (hisS) (Thermoplasma volcanium (strain ATCC 51530 / DSM 4299 / JCM 9571 / NBRC 15438 / GSS1)).